Reading from the N-terminus, the 259-residue chain is Phosphatidylglycerol--prolipoprotein diacylglyceryl transferase (259 aa).

The next 4 membrane-spanning stretches (helical) occupy residues Ile10–Tyr30, Ile50–Tyr70, Trp86–Phe106, and Ile112–Gly132. Arg133 is a binding site for a 1,2-diacyl-sn-glycero-3-phospho-(1'-sn-glycerol). A run of 3 helical transmembrane segments spans residues Leu169–Phe189, Gly197–Val217, and Ile227–Ile247.

The protein belongs to the Lgt family.

The protein localises to the cell inner membrane. It carries out the reaction L-cysteinyl-[prolipoprotein] + a 1,2-diacyl-sn-glycero-3-phospho-(1'-sn-glycerol) = an S-1,2-diacyl-sn-glyceryl-L-cysteinyl-[prolipoprotein] + sn-glycerol 1-phosphate + H(+). It participates in protein modification; lipoprotein biosynthesis (diacylglyceryl transfer). Catalyzes the transfer of the diacylglyceryl group from phosphatidylglycerol to the sulfhydryl group of the N-terminal cysteine of a prolipoprotein, the first step in the formation of mature lipoproteins. This Ehrlichia ruminantium (strain Welgevonden) protein is Phosphatidylglycerol--prolipoprotein diacylglyceryl transferase.